Here is a 158-residue protein sequence, read N- to C-terminus: UPF0303 protein SCO2848 (158 aa).

This sequence belongs to the UPF0303 family.

The chain is UPF0303 protein SCO2848 from Streptomyces coelicolor (strain ATCC BAA-471 / A3(2) / M145).